The chain runs to 625 residues: ATP-dependent rRNA helicase spb4 (625 aa).

The short motif at tryptophan 14–alanine 42 is the Q motif element. The Helicase ATP-binding domain maps to isoleucine 45 to isoleucine 246. Residue alanine 58–threonine 65 coordinates ATP. Residues aspartate 194–aspartate 197 carry the DEAD box motif. One can recognise a Helicase C-terminal domain in the interval alanine 278–isoleucine 436. The segment at lysine 550–glutamate 597 is disordered. 2 stretches are compositionally biased toward basic and acidic residues: residues arginine 553 to arginine 570 and arginine 577 to glutamate 597. The stretch at serine 557–aspartate 614 forms a coiled coil.

This sequence belongs to the DEAD box helicase family. DDX55/SPB4 subfamily. Component of pre-60S ribosomal complexes.

The protein resides in the nucleus. Its subcellular location is the nucleolus. It catalyses the reaction ATP + H2O = ADP + phosphate + H(+). ATP-binding RNA helicase involved in the biogenesis of 60S ribosomal subunits. Binds 90S pre-ribosomal particles and dissociates from pre-60S ribosomal particles after processing of 27SB pre-rRNA. Required for the normal formation of 18S rRNA through the processing of pre-rRNAs at sites A0, A1 and A2, and the normal formation of 25S and 5.8S rRNAs through the processing of pre-rRNAs at sites C1 and C2. This is ATP-dependent rRNA helicase spb4 from Sclerotinia sclerotiorum (strain ATCC 18683 / 1980 / Ss-1) (White mold).